A 107-amino-acid polypeptide reads, in one-letter code: EIVLTQSPAITAASLGQKVTITCSASSSVSYMHWYQQKSGTSPKPWIYEISKLASGVPARFSGSGSGTSYSLTISSMEAEDAAIYYCQQWNYPLITFGAGTKLELKR.

A framework-1 region spans residues 1 to 23 (EIVLTQSPAITAASLGQKVTITC). A disulfide bridge connects residues cysteine 23 and cysteine 87. The interval 24–33 (SASSSVSYMH) is complementarity-determining-1. The tract at residues 34–48 (WYQQKSGTSPKPWIY) is framework-2. The interval 49–55 (EISKLAS) is complementarity-determining-2. The segment at 56–87 (GVPARFSGSGSGTSYSLTISSMEAEDAAIYYC) is framework-3. A complementarity-determining-3 region spans residues 88–96 (QQWNYPLIT). The interval 97-106 (FGAGTKLELK) is framework-4.

The chain is Ig kappa chain V-VI region TEPC 601/TEPC 191 from Mus musculus (Mouse).